The chain runs to 391 residues: ATP phosphoribosyltransferase regulatory subunit (391 aa).

It belongs to the class-II aminoacyl-tRNA synthetase family. HisZ subfamily. As to quaternary structure, heteromultimer composed of HisG and HisZ subunits.

Its subcellular location is the cytoplasm. Its pathway is amino-acid biosynthesis; L-histidine biosynthesis; L-histidine from 5-phospho-alpha-D-ribose 1-diphosphate: step 1/9. In terms of biological role, required for the first step of histidine biosynthesis. May allow the feedback regulation of ATP phosphoribosyltransferase activity by histidine. The chain is ATP phosphoribosyltransferase regulatory subunit from Nitrosomonas europaea (strain ATCC 19718 / CIP 103999 / KCTC 2705 / NBRC 14298).